A 221-amino-acid chain; its full sequence is Serine/arginine-rich splicing factor 9 (221 aa).

2 RRM domains span residues 14–89 and 111–187; these read GRIY…FPRT and FRVL…PERS. Lys36 participates in a covalent cross-link: Glycyl lysine isopeptide (Lys-Gly) (interchain with G-Cter in SUMO2). Residues 188–200 form an interaction with SAFB1 region; it reads TSYGYSRSRSGSR. A Phosphoserine modification is found at Ser189. Positions 189–198 are enriched in low complexity; it reads SYGYSRSRSG. Residues 189-221 form a disordered region; the sequence is SYGYSRSRSGSRGRDSPYQSRGSPHYFSPFRPY. The residue at position 192 (Tyr192) is a Phosphotyrosine. Residues Ser193, Ser195, Ser204, Ser208, and Ser211 each carry the phosphoserine modification. Tyr214 carries the post-translational modification Phosphotyrosine. Position 216 is a phosphoserine (Ser216).

Belongs to the splicing factor SR family. In terms of assembly, interacts with KHDRBS3. Interacts with HABP4. Interacts with NOL3/ARC/NOP30. Interacts with NSEP1/YB-1/YB1. Interacts with SAFB/SAFB1. Interacts with SRSF6/SFRS6. Interacts with TRA2B/SFRS10. Interacts with C1QBP. May also interact with DUSP11/PIR1. Post-translationally, extensively phosphorylated on serine residues in the RS domain. As to expression, expressed at high levels in the heart, kidney, pancreas and placenta, and at lower levels in the brain, liver, lung and skeletal muscle.

It is found in the nucleus. Functionally, plays a role in constitutive splicing and can modulate the selection of alternative splice sites. Represses the splicing of MAPT/Tau exon 10. This Homo sapiens (Human) protein is Serine/arginine-rich splicing factor 9 (SRSF9).